A 162-amino-acid polypeptide reads, in one-letter code: Urease accessory protein UreE 1 (162 aa).

Residues 143-162 form a disordered region; sequence SGGHQHHHGHDHDHHHPDHE. Residues 152-162 show a composition bias toward basic and acidic residues; it reads HDHDHHHPDHE.

Belongs to the UreE family.

It is found in the cytoplasm. Involved in urease metallocenter assembly. Binds nickel. Probably functions as a nickel donor during metallocenter assembly. This Brucella suis biovar 1 (strain 1330) protein is Urease accessory protein UreE 1.